The following is a 4882-amino-acid chain: Dual E2 ubiquitin-conjugating enzyme/E3 ubiquitin-protein ligase BIRC6 (4882 aa).

WD repeat units follow at residues 71–109 (DGLH…QASA) and 110–139 (LSAK…AVGC). A BIR repeat occupies 292 to 362 (RRETFTSWPH…RHSPNCPFVK (71 aa)). Cys331, Cys334, His351, and Cys358 together coordinate Zn(2+). One copy of the WD 3 repeat lies at 382 to 429 (LPSADGADRIACFGSGSCPQFLAAATKRGKICIWDVSKLMKVHLKFEI). 3 disordered regions span residues 468–502 (DIPK…SQKE), 542–561 (GANP…KHQE), and 582–622 (ATSP…SELN). Residues 475–485 (DSDDLLEDSDS) are compositionally biased toward acidic residues. Phosphoserine is present on residues Ser476, Ser483, and Ser485. WD repeat units lie at residues 504–723 (MEVS…VQCL), 733–854 (TLCI…QHIK), 855–931 (DPQD…AKVE), and 932–970 (PPKK…FLQI). Positions 551-561 (KSEKTKEKHQE) are enriched in basic and acidic residues. Residues 582-591 (ATSPISSNSH) show a composition bias toward polar residues. Phosphoserine occurs at positions 584 and 593. Residues 598 to 622 (SRTQGESISEQGSTDNESCTNSELN) are compositionally biased toward polar residues. The tract at residues 1057–1077 (QQQRRHPQHLHQQHHGDAAQH) is disordered. Positions 1060–1069 (RRHPQHLHQQ) are enriched in basic residues. The residue at position 1724 (Thr1724) is a Phosphothreonine. Residues Ser2245 and Ser2978 each carry the phosphoserine modification. The segment at 2969-2998 (VTTNTTDSVSDEEKVSGGKDVNGSSASTPG) is disordered. An HRRAR loop; important for DIABLO/SMAC and HTRA2 binding region spans residues 3212–3216 (HRRAR). In terms of domain architecture, Ubiquitin-like spans 3842–4092 (DEKVTMFLQS…ESLLETCPIQ (251 aa)). 2 disordered regions span residues 3908-3927 (SEQK…KVKA) and 3943-3973 (LKSQ…IGSA). Thr3954 bears the Phosphothreonine mark. Ser4047 bears the Phosphoserine mark. A disordered region spans residues 4285-4304 (VPNSSLSQTEPQVSNSHNPT). A compositionally biased stretch (polar residues) spans 4286–4304 (PNSSLSQTEPQVSNSHNPT). In terms of domain architecture, UBC core spans 4598–4765 (ARARRLAQEA…IRQATVKWAM (168 aa)). The active-site Glycyl thioester intermediate is the Cys4691. The tract at residues 4857 to 4882 (AGAEDTLTHDHVNPSSSKDLPSDFQL) is disordered. The span at 4869 to 4882 (NPSSSKDLPSDFQL) shows a compositional bias: polar residues.

Belongs to the BIRC6 family. As to quaternary structure, homodimer; antiparallel. Interacts with DIABLO/SMAC, likely with higher affinity to SMAC dimer than SMAC monomer; this interaction blocks the substrate-binding site and inhibits the caspase inhibition activity of BIRC6. Interacts with RNF41, KIF23/MKLP1, USP8/UBPY, BIRC5/survivin, MAP2K1/MEK1, RAB8A/RAB8, RAB11A/RAB11, PLK1, EXOC3/SEC6 and EXOC4/SEC8. In terms of processing, ubiquitinated. Ubiquitination is mediated by RNF41 E3 ligase and leads to proteasomal degradation, impairing inhibition of apoptosis. Deubiquitinated by USP8/UBPY. Autoubiquitinated; mediated by E1 ubiquitin activating enzyme UBA6. Proteolytically cleaved. Acts as substrate for CASP3, CASP6, CASP7, CASP9 and HTRA2. As to expression, widely expressed. Highly expressed in the brain and kidney.

It localises to the golgi apparatus. Its subcellular location is the trans-Golgi network membrane. It is found in the endosome. The protein localises to the cytoplasm. The protein resides in the cytoskeleton. It localises to the spindle pole. Its subcellular location is the microtubule organizing center. It is found in the centrosome. The protein localises to the midbody. The protein resides in the midbody ring. It carries out the reaction S-ubiquitinyl-[E1 ubiquitin-activating enzyme]-L-cysteine + [acceptor protein]-L-lysine = [E1 ubiquitin-activating enzyme]-L-cysteine + N(6)-monoubiquitinyl-[acceptor protein]-L-lysine.. Its activity is regulated as follows. Inhibited by DIABLO/SMAC, which competes for the substrate-binding sites on BIRC6. BIRC6 inhibits caspases and protease by ubiquitination but BIRC6 itself is subjected to protease cleavage by CASP3, CASP6, CASP7, CASP9 and HTRA2 by protease cleavage. Functionally, anti-apoptotic protein known as inhibitor of apoptosis (IAP) which can regulate cell death by controlling caspases and by acting as an E3 ubiquitin-protein ligase. Unlike most IAPs, does not contain a RING domain and it is not a RING-type E3 ligase. Instead acts as a dual E2/E3 enzyme that combines ubiquitin conjugating (E2) and ubiquitin ligase (E3) activities in a single polypeptide. Ubiquitination is mediated by a non-canonical E1 ubiquitin activating enzyme UBA6. Ubiquitinates CASP3, CASP7 and CASP9 and inhibits their caspase activity; also ubiquitinates their procaspases but to a weaker extent. Ubiquitinates pro-apoptotic factors DIABLO/SMAC and HTRA2. DIABLO/SMAC antagonizes the caspase inhibition activity of BIRC6 by competing for the same binding sites as the caspases. Ubiquitinates the autophagy protein MAP1LC3B; this activity is also inhibited by DIABLO/SMAC. Important regulator for the final stages of cytokinesis. Crucial for normal vesicle targeting to the site of abscission, but also for the integrity of the midbody and the midbody ring, and its striking ubiquitin modification. Required for normal placenta development. The sequence is that of Dual E2 ubiquitin-conjugating enzyme/E3 ubiquitin-protein ligase BIRC6 (Birc6) from Mus musculus (Mouse).